Here is a 1937-residue protein sequence, read N- to C-terminus: Myosin-2 (1937 aa).

Residues 33–82 (DAKTSVFVAEPKESFVKGTIQSREGGKVTVKTDAGATLTVKEDQVFPMNP) form the Myosin N-terminal SH3-like domain. Phosphothreonine is present on residues threonine 64 and threonine 69. The Myosin motor domain occupies 86–780 (DKIEDMAMMT…LLGLLEEMRD (695 aa)). Lysine 130 is subject to N6,N6,N6-trimethyllysine. 179-186 (GESGAGKT) is a binding site for ATP. Tyrosine 387 carries the phosphotyrosine modification. The residue at position 417 (threonine 417) is a Phosphothreonine. At serine 623 the chain carries Phosphoserine. Positions 657–679 (LNKLMTNLRSTHPHFVRCIIPNE) are actin-binding. Position 755 is a pros-methylhistidine (histidine 755). An actin-binding region spans residues 759–773 (KFGHTKVFFKAGLLG). Positions 783–812 (LAQIITRTQARCRGFLARVEYQKMVERRES) constitute an IQ domain. Residues 841–1937 (LLKSAETEKE…EVHTKIISEE (1097 aa)) are a coiled coil. Serine 1094 carries the phosphoserine modification. 2 disordered regions span residues 1124–1145 (IEAE…SREL) and 1151–1170 (RLEE…KKRE). Positions 1126–1145 (AERASRAKAEKQRSDLSREL) are enriched in basic and acidic residues. Phosphoserine is present on residues serine 1160 and serine 1235. Residue threonine 1239 is modified to Phosphothreonine. At serine 1241 the chain carries Phosphoserine. Position 1253 is a phosphothreonine (threonine 1253). The residue at position 1259 (serine 1259) is a Phosphoserine. Residue threonine 1284 is modified to Phosphothreonine. 3 positions are modified to phosphoserine: serine 1290, serine 1301, and serine 1304. Tyrosine 1462 is modified (phosphotyrosine). Position 1465 is a phosphothreonine (threonine 1465). The residue at position 1472 (serine 1472) is a Phosphoserine. Tyrosine 1490 carries the phosphotyrosine modification. Phosphoserine is present on serine 1493. Threonine 1499 is modified (phosphothreonine). Residue serine 1512 is modified to Phosphoserine. Phosphothreonine is present on threonine 1515. Phosphoserine occurs at positions 1540, 1552, 1572, 1712, and 1724. Threonine 1728 and threonine 1734 each carry phosphothreonine. A Phosphoserine modification is found at serine 1737. A disordered region spans residues 1883 to 1913 (QAEEAEEQSNTNLSKFRKLQHELEEAEERAD).

The protein belongs to the TRAFAC class myosin-kinesin ATPase superfamily. Myosin family. In terms of assembly, muscle myosin is a hexameric protein that consists of 2 heavy chain subunits (MHC), 2 alkali light chain subunits (MLC) and 2 regulatory light chain subunits (MLC-2). Interacts with GCSAM.

Its subcellular location is the cytoplasm. The protein localises to the myofibril. Myosins are actin-based motor molecules with ATPase activity essential for muscle contraction. This chain is Myosin-2 (MYH2), found in Equus caballus (Horse).